Here is a 614-residue protein sequence, read N- to C-terminus: UvrABC system protein C (614 aa).

The GIY-YIG domain maps to 19–97; that stretch reads SLPGCYLWKN…IKKYNPKFNV (79 aa). A UVR domain is found at 208-243; it reads ERLVADLKKAMMDASSKMEYERAGFLKQRIEKINQL.

This sequence belongs to the UvrC family. As to quaternary structure, interacts with UvrB in an incision complex.

The protein resides in the cytoplasm. Functionally, the UvrABC repair system catalyzes the recognition and processing of DNA lesions. UvrC both incises the 5' and 3' sides of the lesion. The N-terminal half is responsible for the 3' incision and the C-terminal half is responsible for the 5' incision. The protein is UvrABC system protein C of Leptospira biflexa serovar Patoc (strain Patoc 1 / Ames).